The sequence spans 491 residues: UDP-N-acetylmuramate--L-alanine ligase (491 aa).

126-132 (GTHGKTT) contacts ATP.

It belongs to the MurCDEF family.

It is found in the cytoplasm. The catalysed reaction is UDP-N-acetyl-alpha-D-muramate + L-alanine + ATP = UDP-N-acetyl-alpha-D-muramoyl-L-alanine + ADP + phosphate + H(+). It participates in cell wall biogenesis; peptidoglycan biosynthesis. Its function is as follows. Cell wall formation. The chain is UDP-N-acetylmuramate--L-alanine ligase from Enterobacter sp. (strain 638).